A 107-amino-acid polypeptide reads, in one-letter code: Cell cycle protein GpsB (107 aa).

Residues 32-65 (LDNVIQDYETYISEIEELKAEIERLKNQNTHPKS) are a coiled coil. The segment at 57-80 (KNQNTHPKSPSTENRHAMVQPTRV) is disordered. Polar residues predominate over residues 58 to 68 (NQNTHPKSPST).

It belongs to the GpsB family. In terms of assembly, forms polymers through the coiled coil domains. Interacts with PBP1, MreC and EzrA.

Its subcellular location is the cytoplasm. Functionally, divisome component that associates with the complex late in its assembly, after the Z-ring is formed, and is dependent on DivIC and PBP2B for its recruitment to the divisome. Together with EzrA, is a key component of the system that regulates PBP1 localization during cell cycle progression. Its main role could be the removal of PBP1 from the cell pole after pole maturation is completed. Also contributes to the recruitment of PBP1 to the division complex. Not essential for septum formation. The sequence is that of Cell cycle protein GpsB from Streptococcus uberis (strain ATCC BAA-854 / 0140J).